The chain runs to 587 residues: UDP-N-acetylmuramoylalanine--D-glutamate ligase (587 aa).

The disordered stretch occupies residues 124-147; that stretch reads DHLVPPESPLSDASDISDASDATD. The span at 132–147 shows a compositional bias: low complexity; sequence PLSDASDISDASDATD. 214 to 220 contacts ATP; that stretch reads GTNGKTT.

Belongs to the MurCDEF family.

The protein resides in the cytoplasm. It catalyses the reaction UDP-N-acetyl-alpha-D-muramoyl-L-alanine + D-glutamate + ATP = UDP-N-acetyl-alpha-D-muramoyl-L-alanyl-D-glutamate + ADP + phosphate + H(+). It participates in cell wall biogenesis; peptidoglycan biosynthesis. Cell wall formation. Catalyzes the addition of glutamate to the nucleotide precursor UDP-N-acetylmuramoyl-L-alanine (UMA). The sequence is that of UDP-N-acetylmuramoylalanine--D-glutamate ligase from Polaromonas sp. (strain JS666 / ATCC BAA-500).